A 360-amino-acid polypeptide reads, in one-letter code: Peptide chain release factor 1 (360 aa).

The residue at position 237 (Q237) is an N5-methylglutamine.

This sequence belongs to the prokaryotic/mitochondrial release factor family. In terms of processing, methylated by PrmC. Methylation increases the termination efficiency of RF1.

The protein localises to the cytoplasm. In terms of biological role, peptide chain release factor 1 directs the termination of translation in response to the peptide chain termination codons UAG and UAA. The polypeptide is Peptide chain release factor 1 (Pseudomonas putida (strain ATCC 47054 / DSM 6125 / CFBP 8728 / NCIMB 11950 / KT2440)).